Consider the following 544-residue polypeptide: MKNKFIFFTLNLLLAVLGAVLFALSHPNYLNLNGFPFFAYIALIPFFLLLKRTKLKFSFLWGAFSGALSYFIFNFWIIFFHPLAIYIIIAKYCILYSVLFFVLKIIDSYFSRYSFIFQTIAWVAFEYLNTLGFLGYSYGIMGYTQWNFPILIRVSSIFGVWGISFLLVFFSACSASFLFEFYKEKDIKNVYQRYKLPMMIWVGTFFAFILYGAFTKIDLSEAQRARIALVQPNRDPWLGNLEVYRNNYEELKNLSEKALKNFPDIELVVWPETAFIPMIRWHYKYTSTYNPNSLLVRELLHFLDNQKVPFLIGNDDGVLDEKFSDNNFDNLEDKRLDYNAALLFIPKKNVSPPEPQTYRKMHLVPFTEHFPYQKLFPRFYEFLKENDTHFWEKGKEANLLEFNNFKIGTPICFEDTFGYISKAFSKKGANIIINLTNDAWANSAVSQYQHLSMAVFRAVENRLPVLRATSSGQTAFIDQNGNIQEMLPPFIKDILVADVTVLTEGHKTVYSYLGDFFGVLCTIVLILNLCFIIINKFIKRSEVK.

The next 6 membrane-spanning stretches (helical) occupy residues 30-50 (LNLN…FLLL), 57-79 (FSFL…WIIF), 91-111 (KYCI…SYFS), 115-135 (FIFQ…GFLG), 157-177 (IFGV…SASF), and 197-217 (PMMI…FTKI). Residues 225-501 (ARIALVQPNR…KDILVADVTV (277 aa)) form the CN hydrolase domain. E272 functions as the Proton acceptor in the catalytic mechanism. K360 is an active-site residue. Catalysis depends on C412, which acts as the Nucleophile. The helical transmembrane segment at 514 to 534 (GDFFGVLCTIVLILNLCFIII) threads the bilayer.

This sequence belongs to the CN hydrolase family. Apolipoprotein N-acyltransferase subfamily.

The protein resides in the cell inner membrane. It catalyses the reaction N-terminal S-1,2-diacyl-sn-glyceryl-L-cysteinyl-[lipoprotein] + a glycerophospholipid = N-acyl-S-1,2-diacyl-sn-glyceryl-L-cysteinyl-[lipoprotein] + a 2-acyl-sn-glycero-3-phospholipid + H(+). It functions in the pathway protein modification; lipoprotein biosynthesis (N-acyl transfer). Functionally, catalyzes the phospholipid dependent N-acylation of the N-terminal cysteine of apolipoprotein, the last step in lipoprotein maturation. This Treponema denticola (strain ATCC 35405 / DSM 14222 / CIP 103919 / JCM 8153 / KCTC 15104) protein is Apolipoprotein N-acyltransferase 1.